Consider the following 339-residue polypeptide: Small ribosomal subunit biogenesis GTPase RsgA (339 aa).

The 161-residue stretch at 111–271 (MRGLLKPVAA…LIDSPGIREF (161 aa)) folds into the CP-type G domain. GTP-binding positions include 159–162 (NKAD) and 213–221 (GQSGVGKSS). The Zn(2+) site is built by C295, C300, H302, and C308.

Belongs to the TRAFAC class YlqF/YawG GTPase family. RsgA subfamily. Monomer. Associates with 30S ribosomal subunit, binds 16S rRNA. The cofactor is Zn(2+).

The protein resides in the cytoplasm. Functionally, one of several proteins that assist in the late maturation steps of the functional core of the 30S ribosomal subunit. Helps release RbfA from mature subunits. May play a role in the assembly of ribosomal proteins into the subunit. Circularly permuted GTPase that catalyzes slow GTP hydrolysis, GTPase activity is stimulated by the 30S ribosomal subunit. In Pseudomonas aeruginosa (strain ATCC 15692 / DSM 22644 / CIP 104116 / JCM 14847 / LMG 12228 / 1C / PRS 101 / PAO1), this protein is Small ribosomal subunit biogenesis GTPase RsgA.